A 410-amino-acid chain; its full sequence is Phosphoserine phosphatase (410 aa).

Positions 13 to 91 constitute an ACT domain; it reads LVKIFGKDRP…QAEIISGIGD (79 aa). The active-site Nucleophile is the Asp187. Mg(2+) contacts are provided by Asp187 and Asp189. Residue Asp189 is the Proton donor of the active site. Substrate contacts are provided by residues Glu196, Arg232, 275 to 276, and Lys320; that span reads SG. Asp343 is a Mg(2+) binding site. Residue Asn346 participates in substrate binding.

It belongs to the HAD-like hydrolase superfamily. SerB family. Requires Mg(2+) as cofactor.

It catalyses the reaction O-phospho-L-serine + H2O = L-serine + phosphate. It carries out the reaction O-phospho-D-serine + H2O = D-serine + phosphate. The protein operates within amino-acid biosynthesis; L-serine biosynthesis; L-serine from 3-phospho-D-glycerate: step 3/3. Its function is as follows. Catalyzes the dephosphorylation of phosphoserine (P-Ser) in vitro. Also catalyzes the dephosphorylation of phosphothreonine (P-Thr) in vitro. This chain is Phosphoserine phosphatase, found in Streptomyces coelicolor (strain ATCC BAA-471 / A3(2) / M145).